The primary structure comprises 267 residues: Apolipoprotein A-I (267 aa).

The N-terminal stretch at 1 to 18 (MKAAVLTLAVLFLTGSQA) is a signal peptide. Repeat copies occupy residues 68–89 (LKLL…EQLG) and 90–111 (PVTQ…QEMS). Positions 68-267 (LKLLDNWDSV…EEYTKKLNTQ (200 aa)) are 10 X approximate tandem repeats. Met-110 carries the methionine sulfoxide modification. The stretch at 112-122 (KDLEEVKAKVQ) is one 3; half-length repeat. 5 repeat units span residues 123–144 (PYLD…QKVE), 145–166 (PLRA…EKLS), 167–188 (PLGE…THLA), 189–210 (PYSD…ENGG), and 211–232 (ARLA…EKAK). Position 136 is a methionine sulfoxide (Met-136). Residues 233–243 (PALEDLRQGLL) form a 9; half-length repeat. Residues 244-267 (PVLESFKVSFLSALEEYTKKLNTQ) form repeat 10.

It belongs to the apolipoprotein A1/A4/E family. As to quaternary structure, homodimer. Interacts with APOA1BP and CLU. Component of a sperm activating protein complex (SPAP), consisting of APOA1, an immunoglobulin heavy chain, an immunoglobulin light chain and albumin. Interacts with NDRG1. Interacts with SCGB3A2. Interacts with NAXE and YJEFN3. Glycosylated. In terms of processing, palmitoylated. Post-translationally, phosphorylation sites are present in the extracellular medium. As to expression, major protein of plasma HDL, also found in chylomicrons.

It is found in the secreted. Its function is as follows. Participates in the reverse transport of cholesterol from tissues to the liver for excretion by promoting cholesterol efflux from tissues and by acting as a cofactor for the lecithin cholesterol acyltransferase (LCAT). As part of the SPAP complex, activates spermatozoa motility. The polypeptide is Apolipoprotein A-I (APOA1) (Pan troglodytes (Chimpanzee)).